A 726-amino-acid chain; its full sequence is tRNA endonuclease ANKZF1 (726 aa).

The interval 40–61 (LARAPRTSCSGSGERESPERKL) is disordered. Over residues 52–61 (GERESPERKL) the composition is skewed to basic and acidic residues. The segment at 72 to 96 (LFCSTCDQTFQNHQEQREHYKLDWH) adopts a C2H2-type zinc-finger fold. A compositionally biased stretch (low complexity) spans 120–130 (STGDLSSISGS). The disordered stretch occupies residues 120–141 (STGDLSSISGSEDSDSASEEDL). Acidic residues predominate over residues 131–141 (EDSDSASEEDL). Residues 203–346 (GPRDCVVLMA…QRVLHKLTTL (144 aa)) form the VLRF1 domain. The active site involves glutamine 246. 3 positions are modified to phosphoserine: serine 258, serine 361, and serine 398. Disordered stretches follow at residues 387-409 (DEKE…EGED) and 436-474 (RRRR…SSQA). Basic residues predominate over residues 436 to 445 (RRRRKRNKKE). Low complexity predominate over residues 457–473 (TLLQQTQEEEPSTQSSQ). The stretch at 493 to 526 (ELWNALLAACRAGDVGVLKLQLAPSPADPRVLSL) is one ANK 1 repeat. Residue serine 533 is modified to Phosphoserine. Residues 534–563 (GGFTLLHAAAAAGRGSVVRLLLEAGADPTV) form an ANK 2 repeat. Residues 588 to 656 (MEKNPDAYDY…RRFAALSDRE (69 aa)) are disordered. Residue threonine 607 is modified to Phosphothreonine. Residues 609-659 (EMEARQATRKREQKAARRQREEQQQRQQEQEEREREEQRRFAALSDREKRA) are a coiled coil. Positions 610-656 (MEARQATRKREQKAARRQREEQQQRQQEQEEREREEQRRFAALSDRE) are enriched in basic and acidic residues. Residues 654–666 (DREKRALAAERRL) form a VCP/p97-interacting motif (VIM) region. 2 positions are modified to phosphoserine: serine 675 and serine 680.

It belongs to the ANKZF1/VMS1 family. Interacts (via VIM motif) with VCP.

It is found in the cytoplasm. Endonuclease that cleaves polypeptidyl-tRNAs downstream of the ribosome-associated quality control (RQC) pathway to release incompletely synthesized polypeptides for degradation. The RQC pathway disassembles aberrantly stalled translation complexes to recycle or degrade the constituent parts. ANKZF1 acts downstream disassembly of stalled ribosomes and specifically cleaves off the terminal 3'-CCA nucleotides universal to all tRNAs from polypeptidyl-tRNAs, releasing (1) ubiquitinated polypeptides from 60S ribosomal subunit for degradation and (2) cleaved tRNAs. ANKZF1-cleaved tRNAs are then repaired and recycled by ELAC1 and TRNT1. Also plays a role in the cellular response to hydrogen peroxide and in the maintenance of mitochondrial integrity under conditions of cellular stress. This Homo sapiens (Human) protein is tRNA endonuclease ANKZF1.